Consider the following 132-residue polypeptide: Large ribosomal subunit protein uL24 (132 aa).

Belongs to the universal ribosomal protein uL24 family. As to quaternary structure, part of the 50S ribosomal subunit.

Its function is as follows. One of two assembly initiator proteins, it binds directly to the 5'-end of the 23S rRNA, where it nucleates assembly of the 50S subunit. Functionally, located at the polypeptide exit tunnel on the outside of the subunit. The protein is Large ribosomal subunit protein uL24 of Aeropyrum pernix (strain ATCC 700893 / DSM 11879 / JCM 9820 / NBRC 100138 / K1).